Consider the following 553-residue polypeptide: Transcriptional regulator HilA (553 aa).

Residues 11 to 107 (NKKFVFDDFI…LYGQGYRFNR (97 aa)) constitute a DNA-binding region (ompR/PhoB-type). Position 62 is a 4-aspartylphosphate (D62). A TPR repeat occupies 372–405 (ADIKYYYGWNLFMAGQLEEALQTINECLKLDPTR).

The main transcriptional regulator of the Salmonella pathogenicity island 1 (SPI1) gene expression. Activates the expression of invasion genes by a direct action at their promoters and also indirectly by increasing the level of InvF. Also binds upstream of prgH and directly activates the expression of prgHIJK operon. In Salmonella typhimurium (strain LT2 / SGSC1412 / ATCC 700720), this protein is Transcriptional regulator HilA (hilA).